A 250-amino-acid polypeptide reads, in one-letter code: Methylthioribulose-1-phosphate dehydratase (250 aa).

Zn(2+) is bound by residues H103 and H105.

It belongs to the aldolase class II family. MtnB subfamily. Zn(2+) is required as a cofactor.

The enzyme catalyses 5-(methylsulfanyl)-D-ribulose 1-phosphate = 5-methylsulfanyl-2,3-dioxopentyl phosphate + H2O. It functions in the pathway amino-acid biosynthesis; L-methionine biosynthesis via salvage pathway; L-methionine from S-methyl-5-thio-alpha-D-ribose 1-phosphate: step 2/6. In terms of biological role, catalyzes the dehydration of methylthioribulose-1-phosphate (MTRu-1-P) into 2,3-diketo-5-methylthiopentyl-1-phosphate (DK-MTP-1-P). In Leptospira borgpetersenii serovar Hardjo-bovis (strain JB197), this protein is Methylthioribulose-1-phosphate dehydratase.